A 183-amino-acid polypeptide reads, in one-letter code: Probable chemoreceptor glutamine deamidase CheD (183 aa).

It belongs to the CheD family.

The enzyme catalyses L-glutaminyl-[protein] + H2O = L-glutamyl-[protein] + NH4(+). In terms of biological role, probably deamidates glutamine residues to glutamate on methyl-accepting chemotaxis receptors (MCPs), playing an important role in chemotaxis. This is Probable chemoreceptor glutamine deamidase CheD from Zymomonas mobilis subsp. mobilis (strain ATCC 31821 / ZM4 / CP4).